The following is a 398-amino-acid chain: MRKSIVLAADNAYLIPLETTIKSVLYHNRDVDFYILNSDIAPEWFKLLGRKMEVVNSTIRSVHIDKELFESYKTGPHINYASYFRFFATEVVESDRVLYLDSDIIVTGELATLFEIDLKGYSIGAVDDVYAYEGRKSGFNTGMLLMDVAKWKEHSIVNSLLELAAEQNQVVHLGDQSILNIYFEDNWLALDKTYNYMVGIDIYHLAQECERLDDNPPTIVHYASHDKPWNTYSISRLRELWWVYRDLDWSEIAFQRSDLNYFERSNQSKKQVMLVTWSADIKHLEYLVQRLPDWHFHLAAPCDCSEELTSLSQYTNVTVYQNVLHSRIDWLLDDSIVYLDINTGGEVFNVVTRAQESGKKIFAFDITRKSMDDGLYDGIFSVERPDDLVDRMKNIEIE.

The tract at residues 1–259 (MRKSIVLAAD…SEIAFQRSDL (259 aa)) is GT8 domain. UDP is bound by residues 8–13 (AADNAY) and 101–102 (DS). The Mn(2+) site is built by D101, D103, and H221. UDP is bound at residue 221-227 (HYASHDK).

This sequence in the N-terminal section; belongs to the glycosyltransferase 8 family.

Functionally, may be involved in the polymorphic O-glycosylation of the serine-rich repeat protein PsrP. Has hydrolytic activity against UDP-galactose and to a lesser extent against UDP-glucose; no glycosyltransferase activity has been seen with tested substrates. This Streptococcus pneumoniae serotype 4 (strain ATCC BAA-334 / TIGR4) protein is Glycosyltransferase GlyF.